Reading from the N-terminus, the 106-residue chain is Transcription factor TRY (106 aa).

The region spanning 34 to 71 (TEQEEDLIFRMYRLVGDRWDLIAGRVPGRQPEEIERYW) is the Myb-like domain. Positions 83 to 106 (RRQLHSSSHKHTKPHRPRFSIYPS) are disordered. A compositionally biased stretch (basic residues) spans 84 to 100 (RQLHSSSHKHTKPHRPR).

Interacts with GL3 and thus prevents GL1 GL3 interaction. Also interacts with BHLH2. Expressed in roots, leaves, siliques and inflorescences.

The protein resides in the nucleus. Transcription factor. Involved in epidermal cell fate specification. Negative regulator of trichome development, including endoreplication, by lateral inhibition involving intercellular interactions. Promotes the formation of hair developing cells (trichoblasts) in H position in root epidermis, probably by inhibiting non-hair cell (atrichoblasts) formation. The chain is Transcription factor TRY (TRY) from Arabidopsis thaliana (Mouse-ear cress).